The chain runs to 909 residues: Probable DNA-directed RNA polymerase subunit beta (909 aa).

The protein belongs to the RNA polymerase beta chain family.

The catalysed reaction is RNA(n) + a ribonucleoside 5'-triphosphate = RNA(n+1) + diphosphate. Functionally, required for late and very late gene expression. May be a component of the novel RNA polymerase activity induced by baculovirus infection. This Lepidoptera (butterflies and moths) protein is Probable DNA-directed RNA polymerase subunit beta (LEF-8).